The sequence spans 597 residues: Phosphoinositide phospholipase C 4 (597 aa).

Positions 26–60 (GPVEDVRDLFEKYTEGDAHMSPEQLQKLMTEEGGE) constitute an EF-hand domain. In terms of domain architecture, PI-PLC X-box spans 114–257 (QNMDAPLSHY…LKEKILISTK (144 aa)). Catalysis depends on residues histidine 129 and histidine 174. Over residues 259–290 (PKEYLEANDTKEKDNGEKGKDSDEDVWGKEPE) the composition is skewed to basic and acidic residues. Residues 259 to 324 (PKEYLEANDT…ERGSCESDTS (66 aa)) form a disordered region. A compositionally biased stretch (polar residues) spans 293–309 (ISTQSDLDKVTSSVNDL). The PI-PLC Y-box domain occupies 333 to 449 (KRLIAIHAGK…GYVKKPDFLM (117 aa)). In terms of domain architecture, C2 spans 449 to 579 (MDASPNGQDF…QGIRAVPLFN (131 aa)).

The cofactor is Ca(2+). In terms of tissue distribution, low expression in leaves, roots, flowers and siliques. Expressed in pollen and in cells of the stigma surface.

Its subcellular location is the cytoplasm. The protein localises to the cytosol. The protein resides in the cell membrane. It carries out the reaction a 1,2-diacyl-sn-glycero-3-phospho-(1D-myo-inositol-4,5-bisphosphate) + H2O = 1D-myo-inositol 1,4,5-trisphosphate + a 1,2-diacyl-sn-glycerol + H(+). Functionally, the production of the second messenger molecules diacylglycerol (DAG) and inositol 1,4,5-trisphosphate (IP3) is mediated by activated phosphatidylinositol-specific phospholipase C enzymes. The protein is Phosphoinositide phospholipase C 4 (PLC4) of Arabidopsis thaliana (Mouse-ear cress).